The sequence spans 245 residues: tRNA1(Val) (adenine(37)-N6)-methyltransferase (245 aa).

This sequence belongs to the methyltransferase superfamily. tRNA (adenine-N(6)-)-methyltransferase family.

The protein localises to the cytoplasm. It catalyses the reaction adenosine(37) in tRNA1(Val) + S-adenosyl-L-methionine = N(6)-methyladenosine(37) in tRNA1(Val) + S-adenosyl-L-homocysteine + H(+). Specifically methylates the adenine in position 37 of tRNA(1)(Val) (anticodon cmo5UAC). This Klebsiella pneumoniae (strain 342) protein is tRNA1(Val) (adenine(37)-N6)-methyltransferase.